Here is a 247-residue protein sequence, read N- to C-terminus: Sugar fermentation stimulation protein homolog (247 aa).

The protein belongs to the SfsA family.

The sequence is that of Sugar fermentation stimulation protein homolog from Methanococcoides burtonii (strain DSM 6242 / NBRC 107633 / OCM 468 / ACE-M).